A 197-amino-acid chain; its full sequence is Nucleoside triphosphate pyrophosphatase (197 aa).

The active-site Proton acceptor is the Asp70.

It belongs to the Maf family. A divalent metal cation serves as cofactor.

It localises to the cytoplasm. It carries out the reaction a ribonucleoside 5'-triphosphate + H2O = a ribonucleoside 5'-phosphate + diphosphate + H(+). The catalysed reaction is a 2'-deoxyribonucleoside 5'-triphosphate + H2O = a 2'-deoxyribonucleoside 5'-phosphate + diphosphate + H(+). Nucleoside triphosphate pyrophosphatase. May have a dual role in cell division arrest and in preventing the incorporation of modified nucleotides into cellular nucleic acids. The chain is Nucleoside triphosphate pyrophosphatase (yhdE) from Shigella flexneri.